A 544-amino-acid chain; its full sequence is Methionine--tRNA ligase (544 aa).

The 'HIGH' region motif lies at 10–20 (PYANGSLHLGH). Zn(2+) is bound by residues cysteine 141, cysteine 144, cysteine 153, and cysteine 156. A 'KMSKS' region motif is present at residues 329 to 333 (KLSTS). Residue threonine 332 coordinates ATP.

The protein belongs to the class-I aminoacyl-tRNA synthetase family. MetG type 1 subfamily. As to quaternary structure, monomer. Zn(2+) is required as a cofactor.

The protein localises to the cytoplasm. It catalyses the reaction tRNA(Met) + L-methionine + ATP = L-methionyl-tRNA(Met) + AMP + diphosphate. Its function is as follows. Is required not only for elongation of protein synthesis but also for the initiation of all mRNA translation through initiator tRNA(fMet) aminoacylation. The protein is Methionine--tRNA ligase of Bacillus mycoides (strain KBAB4) (Bacillus weihenstephanensis).